The following is a 373-amino-acid chain: Peptidoglycan recognition protein 4 (373 aa).

An N-terminal signal peptide occupies residues Met-1–Gly-17. Asn-22, Asn-39, Asn-109, Asn-145, and Asn-247 each carry an N-linked (GlcNAc...) asparagine glycan. N-acetylmuramoyl-L-alanine amidase domains lie at Thr-74–Gly-212 and Tyr-235–Gly-358. Intrachain disulfides connect Cys-210–Cys-332, Cys-226–Cys-270, and Cys-246–Cys-252. Peptidoglycan-binding residues include Tyr-263 and Tyr-274. 2 interaction with murein regions span residues Gln-293–Asp-302 and Arg-353–Thr-354.

This sequence belongs to the N-acetylmuramoyl-L-alanine amidase 2 family. As to quaternary structure, homodimer; disulfide-linked. Heterodimer with PGLYRP3; disulfide-linked. N-glycosylated. In terms of tissue distribution, detected in skin epidermis, eccrine sweat glands and ducts, mucous cells in the submandibular salivary gland, mucous cells in the throat, ciliary body epithelial cells of the eye, small intestine, colon, stomach and in mature epithelial cells of the tongue (at protein level). High expression in skin and esophagus. Expressed also to a much lesser extent in the tonsils and thymus.

Its subcellular location is the secreted. Its function is as follows. Pattern receptor that binds to murein peptidoglycans (PGN) of Gram-positive bacteria. Has bactericidal activity towards Gram-positive bacteria. May kill Gram-positive bacteria by interfering with peptidoglycan biosynthesis. Also binds to Gram-negative bacteria, and has bacteriostatic activity towards Gram-negative bacteria. Plays a role in innate immunity. This chain is Peptidoglycan recognition protein 4 (PGLYRP4), found in Homo sapiens (Human).